We begin with the raw amino-acid sequence, 422 residues long: Serine--tRNA ligase (422 aa).

L-serine is bound at residue 238–240 (TSE). 269 to 271 (RKE) is an ATP binding site. L-serine is bound at residue E292. 356–359 (EISS) is an ATP binding site. S390 contributes to the L-serine binding site.

This sequence belongs to the class-II aminoacyl-tRNA synthetase family. Type-1 seryl-tRNA synthetase subfamily. As to quaternary structure, homodimer. The tRNA molecule binds across the dimer.

It is found in the cytoplasm. It carries out the reaction tRNA(Ser) + L-serine + ATP = L-seryl-tRNA(Ser) + AMP + diphosphate + H(+). It catalyses the reaction tRNA(Sec) + L-serine + ATP = L-seryl-tRNA(Sec) + AMP + diphosphate + H(+). It functions in the pathway aminoacyl-tRNA biosynthesis; selenocysteinyl-tRNA(Sec) biosynthesis; L-seryl-tRNA(Sec) from L-serine and tRNA(Sec): step 1/1. Its function is as follows. Catalyzes the attachment of serine to tRNA(Ser). Is also able to aminoacylate tRNA(Sec) with serine, to form the misacylated tRNA L-seryl-tRNA(Sec), which will be further converted into selenocysteinyl-tRNA(Sec). The chain is Serine--tRNA ligase from Helicobacter hepaticus (strain ATCC 51449 / 3B1).